A 436-amino-acid chain; its full sequence is Ribulose bisphosphate carboxylase large chain (436 aa).

Lys4 carries the post-translational modification N6,N6,N6-trimethyllysine. Substrate is bound by residues Asn113 and Thr163. The Proton acceptor role is filled by Lys165. Position 167 (Lys167) interacts with substrate. Lys191, Asp193, and Glu194 together coordinate Mg(2+). N6-carboxylysine is present on Lys191. His284 acts as the Proton acceptor in catalysis. Residues Arg285, His317, and Ser369 each coordinate substrate.

This sequence belongs to the RuBisCO large chain family. Type I subfamily. Heterohexadecamer of 8 large chains and 8 small chains; disulfide-linked. The disulfide link is formed within the large subunit homodimers. The cofactor is Mg(2+). The disulfide bond which can form in the large chain dimeric partners within the hexadecamer appears to be associated with oxidative stress and protein turnover.

The protein resides in the plastid. The protein localises to the chloroplast. The catalysed reaction is 2 (2R)-3-phosphoglycerate + 2 H(+) = D-ribulose 1,5-bisphosphate + CO2 + H2O. It carries out the reaction D-ribulose 1,5-bisphosphate + O2 = 2-phosphoglycolate + (2R)-3-phosphoglycerate + 2 H(+). Functionally, ruBisCO catalyzes two reactions: the carboxylation of D-ribulose 1,5-bisphosphate, the primary event in carbon dioxide fixation, as well as the oxidative fragmentation of the pentose substrate in the photorespiration process. Both reactions occur simultaneously and in competition at the same active site. The polypeptide is Ribulose bisphosphate carboxylase large chain (Sanguinaria canadensis (Bloodroot)).